A 103-amino-acid polypeptide reads, in one-letter code: Pilin (103 aa).

The N-terminal stretch at 1–30 is a signal peptide; it reads MYRFACRTLMLAACILATGVAGLGVGAQSA. Residues 61–76 show a composition bias toward basic and acidic residues; the sequence is HDDFHRDSDGPDHSRD. Residues 61 to 103 form a disordered region; sequence HDDFHRDSDGPDHSRDYPGPILEGPVLDDPGAAPPPPAAGGGA. Residues 92 to 103 are compositionally biased toward pro residues; that stretch reads AAPPPPAAGGGA.

Belongs to the mycobacterial pilin family. Forms a homomer composed of subunits assembled in a large structure.

It localises to the fimbrium. Its function is as follows. Structural subunit of pili, which are thin, flexible, coiled-coil, aggregative fibers. Mediates adhesion to the extracellular matrix, an event that would facilitate direct interaction with the host epithelium during infection in the lung or other tissues. This Mycobacterium bovis (strain ATCC BAA-935 / AF2122/97) protein is Pilin (mtp).